A 657-amino-acid polypeptide reads, in one-letter code: MSDAHNAQLDWDEHGQPLSRSYGDVYFSRANGLEETRHVFLAHNQIIERCQALPAGGRLVIGETGFGTGLNFLCAWQAFAEHAPRDARLHFVSVEKFPLTQTDLQRALALWPELAPYAEQLLAQYRAIHPGFQRLLLDGGRVVLTLMIGDVLECLPQLDARIDAWFLDGFAPAKNPEMWTDSLFTELARLSAPGATLATFTSAGFVRRGLIAAGFAVQRVKGFGHKREMLAGPFQAEPAPRSAPWFARPTLAAGARQAVVIGAGLAGCATAASLAARGWRVTLLERHDDVAREASGNPQGVLYLKLSAHGTVLSRLIVAGFGHTRRLLERLQRGSDWDACGVLQLAFDAKEAERQNKLAAAFPDDLLHALPQTEAEARAGIGLPAGGLFYPDAGWVHPPALCRQLAQHPLIELRPYQEALSLSRQQERWCVEGQNGVLAEAPVLILACAAEIGRLLPEANLPLKRIRGQISRLPANESSSALRTVVCAEGYVAPARDDEHTLGASFDFHSDDLTPSVAEHAGNLELLREISQDLAERLDTQTLDPATLQGRAAFRCTSPDYLPLVGPLAAGQAFNQAYAVLAKDARQVPETPCPWLDGLYINSGHGSRGLITAPLSGELIAAWLEDEPLPLPREVAEACHPNRFMLRQLIRGTGSPT.

The tRNA (mnm(5)s(2)U34)-methyltransferase stretch occupies residues 1 to 235 (MSDAHNAQLD…KREMLAGPFQ (235 aa)). Residues 261 to 657 (IGAGLAGCAT…QLIRGTGSPT (397 aa)) are FAD-dependent cmnm(5)s(2)U34 oxidoreductase.

It in the N-terminal section; belongs to the methyltransferase superfamily. tRNA (mnm(5)s(2)U34)-methyltransferase family. In the C-terminal section; belongs to the DAO family. It depends on FAD as a cofactor.

It localises to the cytoplasm. The catalysed reaction is 5-aminomethyl-2-thiouridine(34) in tRNA + S-adenosyl-L-methionine = 5-methylaminomethyl-2-thiouridine(34) in tRNA + S-adenosyl-L-homocysteine + H(+). In terms of biological role, catalyzes the last two steps in the biosynthesis of 5-methylaminomethyl-2-thiouridine (mnm(5)s(2)U) at the wobble position (U34) in tRNA. Catalyzes the FAD-dependent demodification of cmnm(5)s(2)U34 to nm(5)s(2)U34, followed by the transfer of a methyl group from S-adenosyl-L-methionine to nm(5)s(2)U34, to form mnm(5)s(2)U34. This is tRNA 5-methylaminomethyl-2-thiouridine biosynthesis bifunctional protein MnmC from Ectopseudomonas mendocina (strain ymp) (Pseudomonas mendocina).